A 355-amino-acid chain; its full sequence is Protein RecA (355 aa).

65–72 lines the ATP pocket; it reads GPESSGKT.

The protein belongs to the RecA family.

Its subcellular location is the cytoplasm. Can catalyze the hydrolysis of ATP in the presence of single-stranded DNA, the ATP-dependent uptake of single-stranded DNA by duplex DNA, and the ATP-dependent hybridization of homologous single-stranded DNAs. It interacts with LexA causing its activation and leading to its autocatalytic cleavage. The polypeptide is Protein RecA (Pseudomonas putida (strain GB-1)).